We begin with the raw amino-acid sequence, 872 residues long: Protein SCD5 (872 aa).

2 disordered regions span residues 1–98 (MSFD…SGGD) and 209–239 (PKPR…TGDQ). The span at 48–85 (FWDQGSRSHSDTTLSYRNNHSNTAADNATNVSSPQKDN) shows a compositional bias: polar residues. The short motif at 272–276 (KKVRF) is the KKRVK motif; Required for interaction with GLC7, endocytosis and actin cytoskeleton organization element. Disordered stretches follow at residues 280–321 (ITFQ…LDFT) and 338–358 (SGLV…KKVL). 2 stretches are compositionally biased toward polar residues: residues 284–296 (DPPN…SNNS) and 339–348 (GLVSSLPSEQ). 12 consecutive repeat copies span residues 405-424 (QLPL…HLVR), 439-458 (QTGL…YLMR), 479-498 (SGGL…YLMK), 534-545 (SPNITLPQSNQQ), 564-575 (SPQHTYSNNVRI), 593-604 (PPQNTLPQHQQS), 608-619 (SPQNTIPQHQRS), 623-634 (SPQNTFTQNQPI), 636-647 (SPQHTYSNNQAT), 650-661 (SPQNTYTNNQQQ), 683-694 (PPQHMYSNVQKQ), and 717-728 (SPQNAANSYFQS). A 3 X 20 AA approximate repeats region spans residues 405 to 448 (QLPLEPLKPTATGSANHLVREEYNQGLHPSNGAIQTGLQPLKPT). 2 positions are modified to phosphothreonine; by PRK1: threonine 416 and threonine 450. Positions 460-489 (HMEQPQSIKPSSTPETVTNSGGLQPLKPTA) are disordered. Residues 462-481 (EQPQSIKPSSTPETVTNSGG) show a composition bias toward polar residues. Phosphothreonine; by PRK1 is present on threonine 490. Disordered regions lie at residues 516-571 (QFTN…TYSN) and 591-620 (AFPP…QRSQ). The tract at residues 534-728 (SPNITLPQSN…QNAANSYFQS (195 aa)) is 9 X 12 AA approximate repeats. The residue at position 564 (serine 564) is a Phosphoserine. A compositionally biased stretch (polar residues) spans 594–620 (PQNTLPQHQQSHLLSPQNTIPQHQRSQ). A disordered region spans residues 649-681 (ISPQNTYTNNQQQPQHLPPPPPPRAQQQQQGAI). The span at 651–663 (PQNTYTNNQQQPQ) shows a compositional bias: low complexity. The segment covering 697–727 (LVPTQPSYTNSPSIQSPNFLSPQNAANSYFQ) has biased composition (polar residues). Disordered stretches follow at residues 697-758 (LVPT…ISSF) and 806-838 (NSDI…QFPF). The segment covering 728 to 745 (SLLSSSPSPNPTPSNAST) has biased composition (low complexity). 2 stretches are compositionally biased toward polar residues: residues 746-758 (VNGN…ISSF) and 806-815 (NSDIHSQPNK). Over residues 823-835 (QQVHQQQQQQQQQ) the composition is skewed to low complexity.

In terms of assembly, interacts (via KKVRF motif) with phosphatase GLC7. In terms of processing, phosphorylation by PRK1 and/or AKL1 on Thr-416, Thr-450 and Thr-490 of repeats 1-1, 1-2 and/or 1-3 negatively regulates SCD5 function in endocytosis and actin cytoskeleton organization.

Its subcellular location is the membrane. Its function is as follows. Regulates both fluid phase and receptor-mediated endocytosis. Involved in vesicular transport at a late stage of the secretory pathway. Regulates actin cytoskeleton organization. This Saccharomyces cerevisiae (strain ATCC 204508 / S288c) (Baker's yeast) protein is Protein SCD5 (SCD5).